The sequence spans 119 residues: Ribonuclease pancreatic (119 aa).

Position 1 is a pyrrolidone carboxylic acid (Q1). The active-site Proton acceptor is H10. 3 disulfides stabilise this stretch: C25/C80, C39/C91, and C57/C106. Position 40–44 (40–44) interacts with substrate; that stretch reads KTRNT. H113 acts as the Proton donor in catalysis.

It belongs to the pancreatic ribonuclease family. In terms of assembly, monomer. Interacts with and forms tight 1:1 complexes with RNH1. Dimerization of two such complexes may occur. Interaction with RNH1 inhibits this protein. In terms of tissue distribution, pancreas.

It localises to the secreted. The catalysed reaction is an [RNA] containing cytidine + H2O = an [RNA]-3'-cytidine-3'-phosphate + a 5'-hydroxy-ribonucleotide-3'-[RNA].. The enzyme catalyses an [RNA] containing uridine + H2O = an [RNA]-3'-uridine-3'-phosphate + a 5'-hydroxy-ribonucleotide-3'-[RNA].. Endonuclease that catalyzes the cleavage of RNA on the 3' side of pyrimidine nucleotides. Acts on single-stranded and double-stranded RNA. The polypeptide is Ribonuclease pancreatic (Iguana iguana (Common iguana)).